A 952-amino-acid polypeptide reads, in one-letter code: Inactive atromentin synthetase invA6 (952 aa).

The segment at 58-462 (DSSVQTRSFS…NGRIKDTVIV (405 aa)) is adenylation (A) domain. Residues 594-672 (APSTETEKTL…SLAKYVDSLV (79 aa)) form the Carrier domain. The thiolation and peptide carrier (T) domain stretch occupies residues 599–669 (TEKTLGRLYA…VISSLAKYVD (71 aa)). Position 631 is an O-(pantetheine 4'-phosphoryl)serine (S631). Residues 695 to 939 (PIFMVHPGIG…LMDFDHVSGF (245 aa)) are thioesterase (TE) domain.

This sequence belongs to the ATP-dependent AMP-binding enzyme family.

Inactive atromentin synthetase homolog. Does not accept 4-hydroxyphenylpyruvate (4-HPP) as substrate. Both the adenylation (A) and the thioesterase (TE) domain of the invA6 enzyme are inactive. In Paxillus involutus (Naked brimcap), this protein is Inactive atromentin synthetase invA6 (invA6).